The chain runs to 513 residues: ATP synthase subunit alpha (513 aa).

169-176 (GDRQTGKT) lines the ATP pocket.

It belongs to the ATPase alpha/beta chains family. F-type ATPases have 2 components, CF(1) - the catalytic core - and CF(0) - the membrane proton channel. CF(1) has five subunits: alpha(3), beta(3), gamma(1), delta(1), epsilon(1). CF(0) has three main subunits: a(1), b(2) and c(9-12). The alpha and beta chains form an alternating ring which encloses part of the gamma chain. CF(1) is attached to CF(0) by a central stalk formed by the gamma and epsilon chains, while a peripheral stalk is formed by the delta and b chains.

It localises to the cell inner membrane. The catalysed reaction is ATP + H2O + 4 H(+)(in) = ADP + phosphate + 5 H(+)(out). Functionally, produces ATP from ADP in the presence of a proton gradient across the membrane. The alpha chain is a regulatory subunit. The polypeptide is ATP synthase subunit alpha (Haemophilus influenzae (strain PittEE)).